The primary structure comprises 777 residues: C6 finger domain transcription factor adaR (777 aa).

The interval methionine 1–proline 20 is disordered. The segment at residues cysteine 24–cysteine 50 is a DNA-binding region (zn(2)-C6 fungal-type). Disordered regions lie at residues glycine 61–isoleucine 85, asparagine 111–threonine 144, serine 182–leucine 213, proline 419–glutamate 440, arginine 468–tryptophan 496, and leucine 655–serine 699. Over residues proline 475–serine 489 the composition is skewed to low complexity. Residues alanine 668–proline 677 are compositionally biased toward pro residues.

The protein resides in the nucleus. Transcription factor that specifically regulates the expression of the ada gene cluster involved in the biosynthesis of the linear tetracyclic TAN-1612 neuropeptide Y receptor antagonist. This is C6 finger domain transcription factor adaR from Aspergillus niger (strain ATCC MYA-4892 / CBS 513.88 / FGSC A1513).